The chain runs to 444 residues: MKTVQLDQLKQQFPLIQTLQDYQETFWFNPHRYPLNEALAKVGLTEQDVKEAEARLARFAPYLAKVFPETQAQYGKIESALVKIADMQQALSLQKHKTLTGKLWLKKDSHLPISGSIKARGGIYEVLAHAEKLAIEAGLLKLEDDYSKLDQDSFRTFFSKYQIAVGSTGNLGLSIGIMSAKLGFRVSVHMSADARQWKKDKLRSLGVNVVEYASDYGVAVEEGRKAAEQDPFCFFIDDENSTTLFLGYAVAGLRLKQQFEQKQIKVDADHPLFVYLPCGVGGGPGGVSFGLKLAFGEHVHCIFAEPTHSPCMLLGVYTGLHDQISVNDIGLDNITAADGLAVGRASGFVGRAMQQLIDGYYTIHDECLYELIALLNQTENIQVEPSAAAGMMGPYYVQTTPDYLALHQLSAEKLQHATHVLWATGGGMVPPDEMQKYLTHSQSN.

At lysine 118 the chain carries N6-(pyridoxal phosphate)lysine.

This sequence belongs to the serine/threonine dehydratase family. DsdA subfamily. The cofactor is pyridoxal 5'-phosphate.

The catalysed reaction is D-serine = pyruvate + NH4(+). This is Probable D-serine dehydratase from Acinetobacter baumannii (strain AB0057).